Consider the following 357-residue polypeptide: Tetraacyldisaccharide 4'-kinase (357 aa).

ATP is bound at residue 54–61 (TVGGAGKT).

It belongs to the LpxK family.

It catalyses the reaction a lipid A disaccharide + ATP = a lipid IVA + ADP + H(+). Its pathway is glycolipid biosynthesis; lipid IV(A) biosynthesis; lipid IV(A) from (3R)-3-hydroxytetradecanoyl-[acyl-carrier-protein] and UDP-N-acetyl-alpha-D-glucosamine: step 6/6. Its function is as follows. Transfers the gamma-phosphate of ATP to the 4'-position of a tetraacyldisaccharide 1-phosphate intermediate (termed DS-1-P) to form tetraacyldisaccharide 1,4'-bis-phosphate (lipid IVA). The sequence is that of Tetraacyldisaccharide 4'-kinase from Rhizobium leguminosarum bv. trifolii (strain WSM2304).